A 262-amino-acid polypeptide reads, in one-letter code: Acyl-[acyl-carrier-protein]--UDP-N-acetylglucosamine O-acyltransferase (262 aa).

It belongs to the transferase hexapeptide repeat family. LpxA subfamily. In terms of assembly, homotrimer.

The protein localises to the cytoplasm. It catalyses the reaction a (3R)-hydroxyacyl-[ACP] + UDP-N-acetyl-alpha-D-glucosamine = a UDP-3-O-[(3R)-3-hydroxyacyl]-N-acetyl-alpha-D-glucosamine + holo-[ACP]. It participates in glycolipid biosynthesis; lipid IV(A) biosynthesis; lipid IV(A) from (3R)-3-hydroxytetradecanoyl-[acyl-carrier-protein] and UDP-N-acetyl-alpha-D-glucosamine: step 1/6. Its function is as follows. Involved in the biosynthesis of lipid A, a phosphorylated glycolipid that anchors the lipopolysaccharide to the outer membrane of the cell. This chain is Acyl-[acyl-carrier-protein]--UDP-N-acetylglucosamine O-acyltransferase, found in Campylobacter curvus (strain 525.92).